The sequence spans 250 residues: Small ribosomal subunit protein uS3z (250 aa).

Residues Leu-21 to Asn-92 form the KH type-2 domain.

It belongs to the universal ribosomal protein uS3 family. Interacts with SNRNP35.

This is Small ribosomal subunit protein uS3z (RPS3A) from Arabidopsis thaliana (Mouse-ear cress).